A 130-amino-acid chain; its full sequence is Small ribosomal subunit protein uS8 (130 aa).

It belongs to the universal ribosomal protein uS8 family.

This is Small ribosomal subunit protein uS8 (RPS15A) from Paracentrotus lividus (Common sea urchin).